A 417-amino-acid chain; its full sequence is Secernin-3 (417 aa).

The propeptide occupies 1–5 (MYPRS). The active site involves Cys6. A Glyoxylic acid (Cys); alternate modification is found at Cys6. Position 6 is a pyruvic acid (Cys); alternate (Cys6).

Belongs to the peptidase C69 family. Secernin subfamily.

Functionally, plays a role in thermal nociception. This chain is Secernin-3 (scrn3), found in Danio rerio (Zebrafish).